A 1348-amino-acid polypeptide reads, in one-letter code: Adhesion G protein-coupled receptor F5 (1348 aa).

The signal sequence occupies residues 1 to 21 (MRSPRTFTFYFLLLVICSSEA). The Extracellular segment spans residues 22 to 1019 (ALSTPTEPIV…LKILLDIISY (998 aa)). The SEA domain maps to 163 to 271 (PEAFITLKLK…NSFQGTPSNE (109 aa)). Ig-like domains are found at residues 268–366 (PSNE…LDVT), 367–464 (PIRI…IAVT), and 469–559 (ANLT…KDVT). Asn270, Asn286, Asn337, and Asn349 each carry an N-linked (GlcNAc...) asparagine glycan. Cys291 and Cys348 are oxidised to a cystine. Cys389 and Cys447 are oxidised to a cystine. Residues Asn470, Asn538, and Asn665 are each glycosylated (N-linked (GlcNAc...) asparagine). A disulfide bridge connects residues Cys490 and Cys543. Ser818 carries the phosphoserine modification. The 165-residue stretch at 841 to 1005 (TPPFLAHPNV…SILMSPDSPD (165 aa)) folds into the GAIN-B domain. Intrachain disulfides connect Cys953–Cys987 and Cys972–Cys989. Positions 953–1005 (CVFWNFSLANNTGGWDSSGCSVEDDGRDNRDRVFCKCNHLTSFSILMSPDSPD) are GPS. The tethered agonist stretch occupies residues 993-1008 (TSFSILMSPDSPDPGS). Residues 1020 to 1040 (IGLGFSIVSLAACLVVEAMVW) traverse the membrane as a helical segment. The Cytoplasmic segment spans residues 1041 to 1055 (KSVTKNRTSYMRHIC). Residues 1056-1076 (IVNIAFCLLIADIWFIVAGAI) form a helical membrane-spanning segment. Topologically, residues 1077–1092 (HDGRYPLNETACVAAT) are extracellular. The helical transmembrane segment at 1093–1113 (FFIHFFYLSVFFWMLTLGLML) threads the bilayer. Residues 1114-1130 (FYRLIFILHDASKSTQK) lie on the Cytoplasmic side of the membrane. Residues 1131 to 1151 (AIAFSLGYGCPLIISSITVGV) form a helical membrane-spanning segment. The Extracellular portion of the chain corresponds to 1152–1175 (TQPQEVYMRKNACWLNWEDTRALL). The helical transmembrane segment at 1176 to 1196 (AFAIPALIIVVVNVSITVVVI) threads the bilayer. The Cytoplasmic portion of the chain corresponds to 1197-1221 (TKILRPSIGDKPGKQEKSSLFQISK). Residues 1222-1242 (SIGVLTPLLGLTWGFGLATVI) traverse the membrane as a helical segment. At 1243–1250 (QGSNAVFH) the chain is on the extracellular side. The helical transmembrane segment at 1251 to 1271 (IIFTLLNAFQGLFILLFGCLW) threads the bilayer. Residues 1272–1348 (DQKVQEALLH…NSSSAYSLLN (77 aa)) are Cytoplasmic-facing. Thr1302 is modified (phosphothreonine). Ser1309 carries the post-translational modification Phosphoserine. Residues 1328–1348 (STPETTSSSLENSSSAYSLLN) form a disordered region.

Belongs to the G-protein coupled receptor 2 family. Adhesion G-protein coupled receptor (ADGR) subfamily. In terms of assembly, homodimer; disulfide-linked. Heterodimer of 2 chains generated by proteolytic processing; the large extracellular N-terminal fragment and the membrane-bound C-terminal fragment predominantly remain associated and non-covalently linked. Fragment generates by the processing enzyme furin remains attached to the extracellular N-terminal fragment. Interacts (via N-terminal extracellular domain) with SFTPD. Highly glycosylated. Post-translationally, proteolytically cleaved at multiple sites: one in the GPS region of the GAIN-B domain (S1 site) and the other in the SEA domain (S2 site). The proteolytic cleavage at S1 site generates an extracellular subunit and a seven-transmembrane subunit. The proteolytic cleavage at S2 site generates a fragment that undergoes proteolytic cleavage by the processing enzyme furin. Widely expressed, with highest levels in lung, pancreas, kidney and heart. In the kidney, expressed more abundantly in the medulla than in the cortex, predominantly expressed in A-intercalated cells (at protein level). Expressed in endothelial cells from various tissues, including brain, heart, kidney, liver, lung and muscle. In the lung, expressed in alveolar type II (ATII) cells (at protein level). Expressed in pancreatic islets of Langerhans, predominantly in delta cells, as well as in endothelial cells. Expressed in white adipose tissue.

It is found in the cell membrane. Its activity is regulated as follows. As an adhesion G protein-coupled receptor (aGPCR) exhibits a large N-terminal extracellular domain containing highly conserved GPCR autoproteolysis-inducing (GAIN) domain. During synthesis, intracellular autoproteolytic processing of nascent chain within the GAIN domain generates a mature protein, consisting of an N-terminal fragment that is non-covalently linked to the C-terminal fragment. The mature protein is routed to the plasma membrane where the N- and C-terminal fragments remain associated, forming the holoreceptor. Dissociation of the aGPCR fragments stimulates G protein signaling through the action of the tethered-peptide agonist stalk that is occluded within the GAIN domain in the holoreceptor form. This dissociation might be induced by ligand binding, such as that of sFNDC4. Its function is as follows. Adhesion G protein-coupled receptor. In alveolar type II (ATII or AT2) cells, required for normal lung surfactant homeostasis. Modulation of both surfactant secretion and uptake by ATII cells is mediated by the downstream activation of GNAQ/GNA11 proteins and may be a consequence of increased cortical F-actin assembly induced by ADGRF5 activation. In the kidney, may play a role in the regulation of acid excretion into the primary urine, possibly by regulating the surface expression of V-ATPase proton pump. As a receptor for soluble FNDC4 (sFNDC4), required for proper systemic glucose tolerance, specifically sensitizing white adipose tissue to insulin. Also plays a role in sFNDC4-induced decrease of local inflammation in white adipose tissue. The polypeptide is Adhesion G protein-coupled receptor F5 (Adgrf5) (Mus musculus (Mouse)).